Here is a 252-residue protein sequence, read N- to C-terminus: 2-succinyl-6-hydroxy-2,4-cyclohexadiene-1-carboxylate synthase (252 aa).

The protein belongs to the AB hydrolase superfamily. MenH family. In terms of assembly, monomer.

The catalysed reaction is 5-enolpyruvoyl-6-hydroxy-2-succinyl-cyclohex-3-ene-1-carboxylate = (1R,6R)-6-hydroxy-2-succinyl-cyclohexa-2,4-diene-1-carboxylate + pyruvate. Its pathway is quinol/quinone metabolism; 1,4-dihydroxy-2-naphthoate biosynthesis; 1,4-dihydroxy-2-naphthoate from chorismate: step 3/7. It participates in quinol/quinone metabolism; menaquinone biosynthesis. In terms of biological role, catalyzes a proton abstraction reaction that results in 2,5-elimination of pyruvate from 2-succinyl-5-enolpyruvyl-6-hydroxy-3-cyclohexene-1-carboxylate (SEPHCHC) and the formation of 2-succinyl-6-hydroxy-2,4-cyclohexadiene-1-carboxylate (SHCHC). The polypeptide is 2-succinyl-6-hydroxy-2,4-cyclohexadiene-1-carboxylate synthase (Escherichia coli (strain UTI89 / UPEC)).